A 551-amino-acid polypeptide reads, in one-letter code: Methionine--tRNA ligase (551 aa).

The short motif at 12 to 22 is the 'HIGH' region element; the sequence is PYANGPLHFGH. 4 residues coordinate Zn(2+): C144, C147, C157, and C160. A 'KMSKS' region motif is present at residues 330 to 334; the sequence is QFSKS. K333 serves as a coordination point for ATP.

It belongs to the class-I aminoacyl-tRNA synthetase family. MetG type 1 subfamily. In terms of assembly, monomer. Requires Zn(2+) as cofactor.

It localises to the cytoplasm. The catalysed reaction is tRNA(Met) + L-methionine + ATP = L-methionyl-tRNA(Met) + AMP + diphosphate. Its function is as follows. Is required not only for elongation of protein synthesis but also for the initiation of all mRNA translation through initiator tRNA(fMet) aminoacylation. The protein is Methionine--tRNA ligase of Chlamydia abortus (strain DSM 27085 / S26/3) (Chlamydophila abortus).